The following is a 206-amino-acid chain: Small ribosomal subunit protein uS4 (206 aa).

The region spanning 96–156 (GRLDNVVYRM…EKAKKQSRVK (61 aa)) is the S4 RNA-binding domain.

The protein belongs to the universal ribosomal protein uS4 family. In terms of assembly, part of the 30S ribosomal subunit. Contacts protein S5. The interaction surface between S4 and S5 is involved in control of translational fidelity.

Its function is as follows. One of the primary rRNA binding proteins, it binds directly to 16S rRNA where it nucleates assembly of the body of the 30S subunit. With S5 and S12 plays an important role in translational accuracy. The polypeptide is Small ribosomal subunit protein uS4 (Klebsiella pneumoniae (strain 342)).